Consider the following 496-residue polypeptide: Cobyric acid synthase (496 aa).

A GATase cobBQ-type domain is found at 256–444 (KINIAVVLLR…IHGILDNQAF (189 aa)). The active-site Nucleophile is C337. Residue H436 is part of the active site.

Belongs to the CobB/CobQ family. CobQ subfamily.

Its pathway is cofactor biosynthesis; adenosylcobalamin biosynthesis. In terms of biological role, catalyzes amidations at positions B, D, E, and G on adenosylcobyrinic A,C-diamide. NH(2) groups are provided by glutamine, and one molecule of ATP is hydrogenolyzed for each amidation. The protein is Cobyric acid synthase of Phocaeicola vulgatus (strain ATCC 8482 / DSM 1447 / JCM 5826 / CCUG 4940 / NBRC 14291 / NCTC 11154) (Bacteroides vulgatus).